Consider the following 245-residue polypeptide: Tetraspanin-6 (245 aa).

The Cytoplasmic portion of the chain corresponds to 1 to 19; that stretch reads MASPSRRLQTKPVITCFKS. A helical membrane pass occupies residues 20–40; it reads VLLIYTFIFWITGVILLAVGI. Topologically, residues 41 to 59 are extracellular; it reads WGKVSLENYFSLLNEKATN. Residues 60 to 80 traverse the membrane as a helical segment; that stretch reads VPFVLIATGTVIILLGTFGCF. Residues 81-93 lie on the Cytoplasmic side of the membrane; it reads ATCRASAWMLKLY. Residues 94–114 traverse the membrane as a helical segment; that stretch reads AMFLTLVFLVELVAAIVGFVF. Residues 115–208 are Extracellular-facing; it reads RHEIKNSFKN…IKVMTIIESE (94 aa). N-linked (GlcNAc...) asparagine glycosylation is present at Asn-134. Residues 209-229 form a helical membrane-spanning segment; sequence MGVVAGISFGVACFQLIGIFL. Topologically, residues 230 to 245 are cytoplasmic; that stretch reads AYCLSRAITNNQYEIV.

The protein belongs to the tetraspanin (TM4SF) family.

The protein resides in the membrane. The chain is Tetraspanin-6 (TSPAN6) from Homo sapiens (Human).